Reading from the N-terminus, the 112-residue chain is uncharacterized protein (112 aa).

This is an uncharacterized protein from Sulfolobus islandicus filamentous virus (isolate Iceland/Hveragerdi) (SIFV).